We begin with the raw amino-acid sequence, 237 residues long: NAD(P)H-hydrate epimerase (237 aa).

Residues 11 to 223 (AASLDRDLMN…GLDIPEYPGV (213 aa)) form the YjeF N-terminal domain. A (6S)-NADPHX-binding site is contributed by 61–65 (NNGGD). Positions 62 and 123 each coordinate K(+). (6S)-NADPHX is bound by residues 127–133 (GFSFSGP) and D156. S159 contacts K(+).

This sequence belongs to the NnrE/AIBP family. It depends on K(+) as a cofactor.

The protein resides in the cytoplasm. It is found in the mitochondrion. It carries out the reaction (6R)-NADHX = (6S)-NADHX. The catalysed reaction is (6R)-NADPHX = (6S)-NADPHX. Catalyzes the epimerization of the S- and R-forms of NAD(P)HX, a damaged form of NAD(P)H that is a result of enzymatic or heat-dependent hydration. This is a prerequisite for the S-specific NAD(P)H-hydrate dehydratase to allow the repair of both epimers of NAD(P)HX. The chain is NAD(P)H-hydrate epimerase from Ajellomyces capsulatus (strain G186AR / H82 / ATCC MYA-2454 / RMSCC 2432) (Darling's disease fungus).